The sequence spans 306 residues: NAD kinase 1 (306 aa).

Asp67 acts as the Proton acceptor in catalysis. NAD(+) is bound by residues 67–68 (DG), 149–150 (ND), and Asp181.

Belongs to the NAD kinase family. It depends on a divalent metal cation as a cofactor.

Its subcellular location is the cytoplasm. It carries out the reaction NAD(+) + ATP = ADP + NADP(+) + H(+). Involved in the regulation of the intracellular balance of NAD and NADP, and is a key enzyme in the biosynthesis of NADP. Catalyzes specifically the phosphorylation on 2'-hydroxyl of the adenosine moiety of NAD to yield NADP. This Synechococcus sp. (strain ATCC 27144 / PCC 6301 / SAUG 1402/1) (Anacystis nidulans) protein is NAD kinase 1.